The primary structure comprises 500 residues: Protein DML1 (500 aa).

The protein belongs to the misato family.

The protein resides in the mitochondrion. Its function is as follows. Involved in the partitioning of the mitochondrial organelle and mitochondrial DNA (mtDNA) inheritance. This Scheffersomyces stipitis (strain ATCC 58785 / CBS 6054 / NBRC 10063 / NRRL Y-11545) (Yeast) protein is Protein DML1 (DML1).